Reading from the N-terminus, the 687-residue chain is Macrolide export ATP-binding/permease protein MacB (687 aa).

Residues 6–244 form the ABC transporter domain; that stretch reads LKLAAVTRRF…LAEAGVDAAE (239 aa). 42-49 is a binding site for ATP; sequence GASGSGKS. Residues 246–256 show a composition bias toward low complexity; sequence AEASEAAVGES. The tract at residues 246 to 281 is disordered; sequence AEASEAAVGESPTRNRHDTPAPPAAVDTDPHVDTGT. The next 4 helical transmembrane spans lie at 312-332, 560-580, 617-637, and 650-670; these read LLTM…VAIG, LTLL…IGVM, LVCL…GALF, and AGAI…FGFM.

The protein belongs to the ABC transporter superfamily. Macrolide exporter (TC 3.A.1.122) family. In terms of assembly, homodimer.

It is found in the cell inner membrane. In terms of biological role, non-canonical ABC transporter that contains transmembrane domains (TMD), which form a pore in the inner membrane, and an ATP-binding domain (NBD), which is responsible for energy generation. Confers resistance against macrolides. The polypeptide is Macrolide export ATP-binding/permease protein MacB (Burkholderia lata (strain ATCC 17760 / DSM 23089 / LMG 22485 / NCIMB 9086 / R18194 / 383)).